The chain runs to 24 residues: Fraternine (24 aa).

A disulfide bridge connects residues C11 and C24. C24 bears the Cysteine amide mark.

In terms of tissue distribution, expressed by the venom gland.

The protein localises to the secreted. Wasp venom peptide that acts as a potent mast cell degranulating peptide without hemolytic activity. Shows neuroprotective effect, since it prevents the death of dopaminergic neurons of the brain substantia nigra region and recovers motor deficit in a 6-hydroxydopamine (6-OHDA)-induced murine model of Parkinson disease. This is Fraternine from Parachartergus fraternus (Artistic wasp).